The chain runs to 509 residues: Scavenger receptor class B member 1 (509 aa).

The Cytoplasmic portion of the chain corresponds to 1–11; sequence MGNLSRARRVT. A helical membrane pass occupies residues 12–32; sequence AALGFIGLLFAVLGIIMIVMV. Residues 33–440 lie on the Extracellular side of the membrane; that stretch reads PSIIKQQVLK…YIQLVLMPKV (408 aa). Asn102, Asn108, Asn173, Asn212, Asn227, Asn255, Asn310, Asn330, and Asn383 each carry an N-linked (GlcNAc...) asparagine glycan. Residues Cys251 and Cys384 are joined by a disulfide bond. Residues 441 to 461 form a helical membrane-spanning segment; it reads LHYAQYVLLALGCVLLLIPII. At 462–509 the chain is on the cytoplasmic side; sequence YQIRSQEKCYLFWISFKKGSKDKEAVQAYSEFLMTSAPKGTVLQEARL.

It belongs to the CD36 family. Post-translationally, N-glycosylated. The six cysteines of the extracellular domain are all involved in intramolecular disulfide bonds.

Its subcellular location is the cell membrane. The protein localises to the membrane. The protein resides in the caveola. Receptor for different ligands such as phospholipids, cholesterol ester, lipoproteins, phosphatidylserine and apoptotic cells. Receptor for HDL, mediating selective uptake of cholesteryl ether and HDL-dependent cholesterol efflux. Also facilitates the flux of free and esterified cholesterol between the cell surface and apoB-containing lipoproteins and modified lipoproteins, although less efficiently than HDL. May be involved in the phagocytosis of apoptotic cells, via its phosphatidylserine binding activity. The protein is Scavenger receptor class B member 1 (SCARB1) of Bos taurus (Bovine).